Consider the following 101-residue polypeptide: NADH-quinone oxidoreductase subunit K (101 aa).

3 helical membrane passes run 5–25 (LTHYVVASGILFAIGLAGIIL), 30–50 (IVILMCLEIMLNAANLALVAF), and 61–81 (VLVFFVITVAAAEVAVGLALI).

This sequence belongs to the complex I subunit 4L family. In terms of assembly, NDH-1 is composed of 14 different subunits. Subunits NuoA, H, J, K, L, M, N constitute the membrane sector of the complex.

The protein localises to the cell inner membrane. It catalyses the reaction a quinone + NADH + 5 H(+)(in) = a quinol + NAD(+) + 4 H(+)(out). NDH-1 shuttles electrons from NADH, via FMN and iron-sulfur (Fe-S) centers, to quinones in the respiratory chain. The immediate electron acceptor for the enzyme in this species is believed to be ubiquinone. Couples the redox reaction to proton translocation (for every two electrons transferred, four hydrogen ions are translocated across the cytoplasmic membrane), and thus conserves the redox energy in a proton gradient. The polypeptide is NADH-quinone oxidoreductase subunit K (Methylacidiphilum infernorum (isolate V4) (Methylokorus infernorum (strain V4))).